A 71-amino-acid polypeptide reads, in one-letter code: MPIIKVRENEPFDVALRRFKRSCEKAGILAEIRRREFYEKPTTERKRAKASAIKRLAKKLTRENARRIRMY.

This sequence belongs to the bacterial ribosomal protein bS21 family.

The polypeptide is Small ribosomal subunit protein bS21 (Buchnera aphidicola subsp. Schizaphis graminum (strain Sg)).